Consider the following 213-residue polypeptide: Pyridoxine/pyridoxamine 5'-phosphate oxidase (213 aa).

Substrate-binding positions include 9-12 (RKDY) and Lys67. FMN contacts are provided by residues 62-67 (RIVLLK), 77-78 (FT), Arg83, Lys84, and Gln106. Tyr124, Arg128, and Ser132 together coordinate substrate. Residues 141–142 (QS) and Trp186 contribute to the FMN site. A substrate-binding site is contributed by 192 to 194 (RLH). Residue Arg196 coordinates FMN.

Belongs to the pyridoxamine 5'-phosphate oxidase family. As to quaternary structure, homodimer. FMN is required as a cofactor.

It catalyses the reaction pyridoxamine 5'-phosphate + O2 + H2O = pyridoxal 5'-phosphate + H2O2 + NH4(+). The catalysed reaction is pyridoxine 5'-phosphate + O2 = pyridoxal 5'-phosphate + H2O2. It functions in the pathway cofactor metabolism; pyridoxal 5'-phosphate salvage; pyridoxal 5'-phosphate from pyridoxamine 5'-phosphate: step 1/1. The protein operates within cofactor metabolism; pyridoxal 5'-phosphate salvage; pyridoxal 5'-phosphate from pyridoxine 5'-phosphate: step 1/1. In terms of biological role, catalyzes the oxidation of either pyridoxine 5'-phosphate (PNP) or pyridoxamine 5'-phosphate (PMP) into pyridoxal 5'-phosphate (PLP). This Cyanothece sp. (strain PCC 7425 / ATCC 29141) protein is Pyridoxine/pyridoxamine 5'-phosphate oxidase.